The sequence spans 537 residues: Glucocorticoid-induced transcript 1 protein (537 aa).

2 disordered regions span residues 1–45 and 62–254; these read MSTA…APAA and LLRG…HGNH. Ser69, Ser96, Ser98, and Ser99 each carry phosphoserine. The segment covering 69–86 has biased composition (low complexity); that stretch reads SPTRPAAAATAAAALGSL. The span at 97 to 106 shows a compositional bias: pro residues; sequence PSSPTPPPAA. Thr101 carries the post-translational modification Phosphothreonine. Residues 121–136 are compositionally biased toward basic and acidic residues; sequence RSPESRRRSSSPERRS. Over residues 152–168 the composition is skewed to low complexity; that stretch reads IRTSSTIRRTSSLDTIT. Phosphoserine occurs at positions 162 and 163. 2 positions are modified to phosphothreonine: Thr166 and Thr168. Basic and acidic residues predominate over residues 178-192; sequence RDPHVHYPSCMRDKA. At Ser214 the chain carries Phosphoserine. A coiled-coil region spans residues 217-244; sequence SADQLKEIAKLRQQLQRSKQSSRHSKEK. A Phosphoserine modification is found at Ser248. Residue Thr256 is modified to Phosphothreonine. Ser293 bears the Phosphoserine mark. The segment covering 309 to 321 has biased composition (basic and acidic residues); the sequence is EVSKPLDIPDGRR. The tract at residues 309 to 407 is disordered; sequence EVSKPLDIPD…KPNNSYMFKR (99 aa). Over residues 329–346 the composition is skewed to polar residues; it reads RSSSTRSIDTQTPSVQER. Thr333 carries the phosphothreonine modification. Ser335 is subject to Phosphoserine. Phosphothreonine is present on Thr340. Residues 347–359 are compositionally biased toward low complexity; it reads SSSCSSHSPCVSP. A phosphoserine mark is found at Ser384, Ser388, Ser396, Ser402, and Ser470. The segment at 495–520 is disordered; sequence SLSDDTSTADSLEPSAQQPSQQQQLL.

In terms of tissue distribution, predominantly expressed in thymus and testis, especially in CD4+CD8+ cells and at specific stages of spermatogenesis.

The sequence is that of Glucocorticoid-induced transcript 1 protein (Glcci1) from Mus musculus (Mouse).